The following is a 407-amino-acid chain: Putative aspartate aminotransferase, cytoplasmic 2 (407 aa).

Lys249 carries the N6-(pyridoxal phosphate)lysine modification.

Belongs to the class-I pyridoxal-phosphate-dependent aminotransferase family. As to quaternary structure, homodimer. Pyridoxal 5'-phosphate is required as a cofactor.

The protein localises to the cytoplasm. It carries out the reaction L-aspartate + 2-oxoglutarate = oxaloacetate + L-glutamate. This chain is Putative aspartate aminotransferase, cytoplasmic 2 (GOT1L1), found in Bos taurus (Bovine).